A 309-amino-acid chain; its full sequence is Homoserine kinase (309 aa).

91-101 serves as a coordination point for ATP; sequence PIGSGLGSSAC.

It belongs to the GHMP kinase family. Homoserine kinase subfamily.

The protein resides in the cytoplasm. It carries out the reaction L-homoserine + ATP = O-phospho-L-homoserine + ADP + H(+). Its pathway is amino-acid biosynthesis; L-threonine biosynthesis; L-threonine from L-aspartate: step 4/5. In terms of biological role, catalyzes the ATP-dependent phosphorylation of L-homoserine to L-homoserine phosphate. The protein is Homoserine kinase of Klebsiella pneumoniae (strain 342).